A 207-amino-acid chain; its full sequence is dTTP/UTP pyrophosphatase (207 aa).

The Proton acceptor role is filled by D80.

Belongs to the Maf family. YhdE subfamily. Requires a divalent metal cation as cofactor.

Its subcellular location is the cytoplasm. It carries out the reaction dTTP + H2O = dTMP + diphosphate + H(+). The catalysed reaction is UTP + H2O = UMP + diphosphate + H(+). Nucleoside triphosphate pyrophosphatase that hydrolyzes dTTP and UTP. May have a dual role in cell division arrest and in preventing the incorporation of modified nucleotides into cellular nucleic acids. This Agrobacterium fabrum (strain C58 / ATCC 33970) (Agrobacterium tumefaciens (strain C58)) protein is dTTP/UTP pyrophosphatase (maf1).